The following is a 420-amino-acid chain: MKTLIARHKAGEHIGICSVCSAHPLVIEAALAFDRNSTRKVLIEATSNQVNQFGGYTGMTPADFREFVFAIADKVGFARERIILGGDHLGPNCWQQENVDAAMEKSVELVKAYVRAGFSKIHLDASMSCAGDPIPLAPETVAERAAVLCFAAESVATDCQREQLSYVIGTEVPVPGGEASAIQSVHITHVEDAANTLRTHQKAFIARGLTEALTRVIAIVVQPGVEFDHSNIIHYQPQEAQALAQWIENTRMVYEAHSTDYQTRTAYWELVRDHFAILKVGPALTFALREAIFALAQIEQELIAPENRSGCLAVIEEVMLDEPQYWKKYYRTGFNDSLLDIRYSLSDRIRYYWPHSRIKNSVETMMVNLQGVDIPLGMISQYLPKQFERIQSGELSAIPHQLIMDKIYDVLRAYRYGCAE.

This sequence belongs to the GatZ/KbaZ family. GatZ subfamily. As to quaternary structure, forms a complex with GatY.

The protein operates within carbohydrate metabolism; D-tagatose 6-phosphate degradation; D-glyceraldehyde 3-phosphate and glycerone phosphate from D-tagatose 6-phosphate: step 2/2. Functionally, component of the tagatose-1,6-bisphosphate aldolase GatYZ that is required for full activity and stability of the Y subunit. Could have a chaperone-like function for the proper and stable folding of GatY. When expressed alone, GatZ does not show any aldolase activity. Is involved in the catabolism of galactitol. In Escherichia coli O157:H7, this protein is D-tagatose-1,6-bisphosphate aldolase subunit GatZ (gatZ).